The primary structure comprises 580 residues: Arginine--tRNA ligase (580 aa).

A 'HIGH' region motif is present at residues 127-137; it reads PNTHKELHVGH.

The protein belongs to the class-I aminoacyl-tRNA synthetase family. In terms of assembly, monomer.

It is found in the cytoplasm. It carries out the reaction tRNA(Arg) + L-arginine + ATP = L-arginyl-tRNA(Arg) + AMP + diphosphate. The chain is Arginine--tRNA ligase from Bdellovibrio bacteriovorus (strain ATCC 15356 / DSM 50701 / NCIMB 9529 / HD100).